The sequence spans 59 residues: uncharacterized protein (59 aa).

This is an uncharacterized protein from Chenopodium amaranticolor (Quinoa).